The sequence spans 605 residues: UvrABC system protein C (605 aa).

The 79-residue stretch at 14–92 (QSCGVYKMVG…IKSLKPLYNI (79 aa)) folds into the GIY-YIG domain. Residues 202-237 (KEVKEQLLFTMRKCSSEENYELAAIYRDRVKFLEQI) form the UVR domain.

This sequence belongs to the UvrC family. Interacts with UvrB in an incision complex.

It is found in the cytoplasm. The UvrABC repair system catalyzes the recognition and processing of DNA lesions. UvrC both incises the 5' and 3' sides of the lesion. The N-terminal half is responsible for the 3' incision and the C-terminal half is responsible for the 5' incision. This Wolbachia sp. subsp. Drosophila simulans (strain wRi) protein is UvrABC system protein C.